The sequence spans 499 residues: MSLLREAERCLVNRKAFASLNAFVTPLDRVGSWIERVKDADARRKRGAPKSSLDGKLIAIKDNICTRDVRTTCASAILENFTSPFNATVVELLEESGAIVAGKTNLDEFGMGSHSTYSHFGPVKGVRADDLGYVSAGGSSGGSAIAVATEQCYAALGTDTGGSVRLPAAYTGTVGFKPSYGLLSRWGVVAYANSLDTVGIIGANTSTVSEVFGVLNRYDHRDPTSISKATRSRIDEITGSTSKTRSERLRIGVPIEYNILELDPFVRETWRKSIQHLKNQGHTVHPVSLPATKQALSAYYVLAPAEASSNLAKYDGVRYGTRDLDSPDNTGGYLYARSRGSGFGPEVKRRIVLGAFSLSAEAIDNYFIQAQKVRRLVQSDFNKVFRLHNPLLQATLTSHPKALESDGDTAEKVDVLVCPTAPSPPPLLCSLENAAPTEAYTNDVFTVPASLAGLPALSVPVTPGDREQESPLGIQVIGQFGDDQLVLDVGSRLEKMNIQ.

Catalysis depends on charge relay system residues Lys-61 and Ser-139. The active-site Acyl-ester intermediate is the Ser-163.

This sequence belongs to the amidase family. GatA subfamily. As to quaternary structure, subunit of the heterotrimeric GatCAB amidotransferase (AdT) complex, composed of A, B and C subunits.

Its subcellular location is the mitochondrion. The enzyme catalyses L-glutamyl-tRNA(Gln) + L-glutamine + ATP + H2O = L-glutaminyl-tRNA(Gln) + L-glutamate + ADP + phosphate + H(+). In terms of biological role, allows the formation of correctly charged Gln-tRNA(Gln) through the transamidation of misacylated Glu-tRNA(Gln) in the mitochondria. The reaction takes place in the presence of glutamine and ATP through an activated gamma-phospho-Glu-tRNA(Gln). This chain is Glutamyl-tRNA(Gln) amidotransferase subunit A, mitochondrial, found in Coccidioides posadasii (strain C735) (Valley fever fungus).